A 133-amino-acid chain; its full sequence is MLPAPHRLRDRRAFQALYQGGQRRSGAGLTLLFQPMPAGCEGIPSQVGLVIGRKVSKSAVKRNRLRRQLREILRPLCPNLKPGYRLLFISKANLLTYRWPELRAEVHRLLQKADLLVSTDVDSTGADSDAKPS.

This sequence belongs to the RnpA family. Consists of a catalytic RNA component (M1 or rnpB) and a protein subunit.

The enzyme catalyses Endonucleolytic cleavage of RNA, removing 5'-extranucleotides from tRNA precursor.. RNaseP catalyzes the removal of the 5'-leader sequence from pre-tRNA to produce the mature 5'-terminus. It can also cleave other RNA substrates such as 4.5S RNA. The protein component plays an auxiliary but essential role in vivo by binding to the 5'-leader sequence and broadening the substrate specificity of the ribozyme. The protein is Ribonuclease P protein component of Synechococcus sp. (strain JA-2-3B'a(2-13)) (Cyanobacteria bacterium Yellowstone B-Prime).